A 561-amino-acid chain; its full sequence is BTB/POZ domain-containing protein At2g46260 (561 aa).

Disordered regions lie at residues 1–31 (MRGS…EGDF) and 100–119 (LTDN…NLDD). Over residues 17–28 (DSNFSRHGSSSE) the composition is skewed to polar residues. Positions 107–119 (DMDDAPGGDNLDD) are enriched in acidic residues. The 70-residue stretch at 143–212 (IDCSTVVRVK…MYSNSLSVTT (70 aa)) folds into the BTB domain. The 93-residue stretch at 266 to 358 (QPLTDAAKQF…YMTCRKLKKV (93 aa)) folds into the BACK domain.

It participates in protein modification; protein ubiquitination. Functionally, may act as a substrate-specific adapter of an E3 ubiquitin-protein ligase complex (CUL3-RBX1-BTB) which mediates the ubiquitination and subsequent proteasomal degradation of target proteins. This chain is BTB/POZ domain-containing protein At2g46260, found in Arabidopsis thaliana (Mouse-ear cress).